The following is a 272-amino-acid chain: Heat stress transcription factor A-7a (272 aa).

Positions 1–26 are disordered; sequence MMNPFLPEGCDPPPPPQPMEGLHENA. The DNA-binding element occupies 27–121; sequence PPPFLTKTFE…LLKNIKRRNP (95 aa). Residues 132–186 form a hydrophobic repeat HR-A/B region; the sequence is ACNELRREKQVLMMEIVSLRQQQQTTKSYIKAMEQRIEGTERKQRQMMSFLARAM. Positions 201 to 216 match the Bipartite nuclear localization signal motif; that stretch reads KKIKELEDNESAKRKR. Basic and acidic residues predominate over residues 203–212; that stretch reads IKELEDNESA. Residues 203-223 are disordered; it reads IKELEDNESAKRKRGSSSMSE. The AHA motif lies at 256–265; it reads DGFWEELLSD.

Belongs to the HSF family. Class A subfamily. As to quaternary structure, homotrimer. Exhibits temperature-dependent phosphorylation.

Its subcellular location is the nucleus. Its function is as follows. Transcriptional activator that specifically binds DNA sequence 5'-AGAAnnTTCT-3' known as heat shock promoter elements (HSE). The sequence is that of Heat stress transcription factor A-7a (HSFA7A) from Arabidopsis thaliana (Mouse-ear cress).